Reading from the N-terminus, the 868-residue chain is V-set and immunoglobulin domain-containing protein 10-like (868 aa).

The N-terminal stretch at 1–27 (MGLSWALLPFLLLAFRAELLALQPALG) is a signal peptide. A compositionally biased stretch (low complexity) spans 26–52 (LGSQPPSASSSHSMGSSRDFVSNVSSS). The interval 26–82 (LGSQPPSASSSHSMGSSRDFVSNVSSSQHPQPPGSEASAGIPDSNRFPQGLNSSHVP) is disordered. At 28–763 (SQPPSASSSH…QAGSDLSPGA (736 aa)) the chain is on the extracellular side. N-linked (GlcNAc...) asparagine glycosylation is found at Asn48, Asn77, and Asn88. The span at 71–80 (RFPQGLNSSH) shows a compositional bias: polar residues. Disordered regions lie at residues 96-154 (LSPD…SGSK) and 323-342 (WSRD…EPPR). Composition is skewed to polar residues over residues 99–108 (DVTSSETPPS) and 133–143 (PASQISVQTPD). Ig-like C2-type domains are found at residues 289 to 381 (PQLS…ADVS) and 389 to 474 (PVIR…SVFN). An intrachain disulfide couples Cys311 to Cys365. An N-linked (GlcNAc...) asparagine glycan is attached at Asn410. A disulfide bridge links Cys415 with Cys458. 3 N-linked (GlcNAc...) asparagine glycosylation sites follow: Asn474, Asn628, and Asn637. A helical membrane pass occupies residues 764–784 (IAGIVLGSLLGLALLAGLLIL). Residues 785-868 (CICCLRRYPG…PWTVRAATQV (84 aa)) lie on the Cytoplasmic side of the membrane.

It is found in the membrane. This chain is V-set and immunoglobulin domain-containing protein 10-like (Vsig10l), found in Mus musculus (Mouse).